The primary structure comprises 177 residues: Nucleoside triphosphate/diphosphate phosphatase (177 aa).

Arg23 functions as the Proton donor in the catalytic mechanism. 6 residues coordinate Mg(2+): Asn87, Asp103, Asp105, Asp107, Asp120, and Glu123.

The protein belongs to the Ntdp family. The cofactor is Mg(2+).

The catalysed reaction is a ribonucleoside 5'-triphosphate + H2O = a ribonucleoside 5'-diphosphate + phosphate + H(+). It catalyses the reaction a ribonucleoside 5'-diphosphate + H2O = a ribonucleoside 5'-phosphate + phosphate + H(+). Functionally, has nucleoside phosphatase activity towards nucleoside triphosphates and nucleoside diphosphates. This is Nucleoside triphosphate/diphosphate phosphatase from Streptococcus pyogenes serotype M3 (strain ATCC BAA-595 / MGAS315).